The chain runs to 678 residues: Photosystem I P700 chlorophyll a apoprotein A1 (678 aa).

The next 8 helical transmembrane spans lie at 75 to 98 (VFAA…FHGA), 152 to 175 (LKVI…FHMH), 192 to 216 (STHH…HISL), 266 to 284 (SAMH…SVLG), 302 to 325 (WHLV…QMSN), 341 to 367 (VSLF…IGLV), 384 to 406 (IILG…LYVH), and 458 to 476 (FMVT…LILV). Residues Cys500 and Cys509 each coordinate [4Fe-4S] cluster. Transmembrane regions (helical) follow at residues 516-537 (HVFL…HFFW) and 591-613 (LAAY…MFLF). His602 contributes to the chlorophyll a' binding site. The chlorophyll a site is built by Met610 and Tyr618. Trp619 lines the phylloquinone pocket. A helical membrane pass occupies residues 651 to 671 (AVGFTHYLLGGIGSTWSFFLA).

This sequence belongs to the PsaA/PsaB family. As to quaternary structure, the PsaA/B heterodimer binds the P700 chlorophyll special pair and subsequent electron acceptors. PSI consists of a core antenna complex that captures photons, and an electron transfer chain that converts photonic excitation into a charge separation. The eukaryotic PSI reaction center is composed of at least 11 subunits. Requires P700 is a chlorophyll a/chlorophyll a' dimer, A0 is one or more chlorophyll a, A1 is one or both phylloquinones and FX is a shared 4Fe-4S iron-sulfur center. as cofactor.

It localises to the plastid. The protein resides in the chloroplast thylakoid membrane. The enzyme catalyses reduced [plastocyanin] + hnu + oxidized [2Fe-2S]-[ferredoxin] = oxidized [plastocyanin] + reduced [2Fe-2S]-[ferredoxin]. Functionally, psaA and PsaB bind P700, the primary electron donor of photosystem I (PSI), as well as the electron acceptors A0, A1 and FX. PSI is a plastocyanin/cytochrome c6-ferredoxin oxidoreductase, converting photonic excitation into a charge separation, which transfers an electron from the donor P700 chlorophyll pair to the spectroscopically characterized acceptors A0, A1, FX, FA and FB in turn. Oxidized P700 is reduced on the lumenal side of the thylakoid membrane by plastocyanin or cytochrome c6. This Amphidinium carterae (Dinoflagellate) protein is Photosystem I P700 chlorophyll a apoprotein A1.